We begin with the raw amino-acid sequence, 419 residues long: UDP-N-acetylglucosamine 1-carboxyvinyltransferase (419 aa).

A phosphoenolpyruvate-binding site is contributed by 22-23 (KN). Position 92 (arginine 92) interacts with UDP-N-acetyl-alpha-D-glucosamine. The Proton donor role is filled by cysteine 116. Cysteine 116 carries the post-translational modification 2-(S-cysteinyl)pyruvic acid O-phosphothioketal. UDP-N-acetyl-alpha-D-glucosamine contacts are provided by aspartate 306 and isoleucine 328.

Belongs to the EPSP synthase family. MurA subfamily.

The protein resides in the cytoplasm. The catalysed reaction is phosphoenolpyruvate + UDP-N-acetyl-alpha-D-glucosamine = UDP-N-acetyl-3-O-(1-carboxyvinyl)-alpha-D-glucosamine + phosphate. The protein operates within cell wall biogenesis; peptidoglycan biosynthesis. Functionally, cell wall formation. Adds enolpyruvyl to UDP-N-acetylglucosamine. In Pseudoalteromonas translucida (strain TAC 125), this protein is UDP-N-acetylglucosamine 1-carboxyvinyltransferase.